The sequence spans 918 residues: Non-lysosomal glucosylceramidase (918 aa).

Positions 886 to 918 (HKKSRRPSVTQGTGLSTQPECGPKRSLANLNSE) are disordered. The segment covering 892-904 (PSVTQGTGLSTQP) has biased composition (polar residues). Ser-893 carries the post-translational modification Phosphoserine.

This sequence belongs to the non-lysosomal glucosylceramidase family. Widely expressed at low level. Highly expressed in testis and brain. Ubiquitously expressed in the brain (at protein level). Expressed by Sertoli cells (at protein level).

It localises to the endoplasmic reticulum membrane. The protein resides in the golgi apparatus membrane. The enzyme catalyses a beta-D-glucosyl-(1&lt;-&gt;1')-N-acylsphing-4-enine + H2O = an N-acylsphing-4-enine + D-glucose. It catalyses the reaction a beta-D-galactosyl-(1&lt;-&gt;1')-N-acylsphing-4-enine + H2O = an N-acylsphing-4-enine + D-galactose. The catalysed reaction is beta-D-glucosyl-(1-&gt;3)-O-lithocholate + H2O = lithocholate + D-glucose. It carries out the reaction beta-D-glucosyl-(1-&gt;3)-O-chenodeoxycholate + H2O = chenodeoxycholate + D-glucose. The enzyme catalyses a di-trans,poly-cis-dolichyl beta-D-glucosyl phosphate + chenodeoxycholate = beta-D-glucosyl-(1-&gt;3)-O-chenodeoxycholate + a di-trans,poly-cis-dolichyl phosphate + H(+). It catalyses the reaction octyl beta-D-glucose + chenodeoxycholate = beta-D-glucosyl-(1-&gt;3)-O-chenodeoxycholate + octan-1-ol. The catalysed reaction is cholesteryl 3-beta-D-glucoside + H2O = cholesterol + D-glucose. It carries out the reaction a beta-D-glucosyl-(1&lt;-&gt;1')-N-acylsphing-4-enine + cholesterol = cholesteryl 3-beta-D-glucoside + an N-acylsphing-4-enine. The enzyme catalyses beta-D-glucosyl-N-(9Z-octadecenoyl)-sphing-4E-enine + cholesterol = N-(9Z-octadecenoyl)-sphing-4-enine + cholesteryl 3-beta-D-glucoside. It catalyses the reaction a beta-D-galactosyl-(1&lt;-&gt;1')-N-acylsphing-4-enine + cholesterol = cholesteryl 3-beta-D-galactoside + an N-acylsphing-4-enine. The catalysed reaction is 1-(beta-D-galactosyl)-N-dodecanoylsphing-4-enine + cholesterol = cholesteryl 3-beta-D-galactoside + N-dodecanoylsphing-4-enine. It functions in the pathway lipid metabolism; sphingolipid metabolism. Its pathway is steroid metabolism; cholesterol metabolism. With respect to regulation, enzymatic activity is dependent on membrane association and requires the presence of lipids. Inhibited by N-(adamantanemethyloxypentyl)-deoxynojirimycin/AMP-DNM. Inhibited by its product sphingosine/N-acylsphing-4-enine in a feedback loop. Also inhibited by other non-acetylated sphingoid bases and their derivatives but not by sphingosine-1-phosphate and complex sphingolipids. Functionally, non-lysosomal glucosylceramidase that catalyzes the hydrolysis of glucosylceramides/GlcCers (such as beta-D-glucosyl-(1&lt;-&gt;1')-N-acylsphing-4-enine) to free glucose and ceramides (such as N-acylsphing-4-enine). GlcCers are membrane glycosphingolipids that have a wide intracellular distribution. They are the main precursors of more complex glycosphingolipids that play a role in cellular growth, differentiation, adhesion, signaling, cytoskeletal dynamics and membrane properties. Also involved in the transglucosylation of cholesterol, transferring glucose from GlcCer, thereby modifying its water solubility and biological properties. Under specific conditions, may catalyze the reverse reaction, transferring glucose from cholesteryl-3-beta-D-glucoside to ceramide (such as N-acylsphing-4-enine). May play a role in the metabolism of bile acids. Able to hydrolyze bile acid 3-O-glucosides as well as to produce bile acid-glucose conjugates thanks to a bile acid glucosyl transferase activity. Catalyzes the hydrolysis of galactosylceramides/GalCers (such as beta-D-galactosyl-(1&lt;-&gt;1')-N-acylsphing-4-enine), as well as galactosyl transfer between GalCers and cholesterol in vitro with lower activity compared with their activity against GlcCers. In Mus musculus (Mouse), this protein is Non-lysosomal glucosylceramidase.